The following is a 499-amino-acid chain: Glycerol kinase (499 aa).

Threonine 12 lines the ADP pocket. ATP-binding residues include threonine 12, threonine 13, and serine 14. Threonine 12 contacts sn-glycerol 3-phosphate. Arginine 16 is a binding site for ADP. Residues arginine 82, glutamate 83, tyrosine 134, and aspartate 245 each contribute to the sn-glycerol 3-phosphate site. Positions 82, 83, 134, 245, and 246 each coordinate glycerol. Residues threonine 267 and glycine 311 each coordinate ADP. ATP-binding residues include threonine 267, glycine 311, glutamine 315, and glycine 412. 2 residues coordinate ADP: glycine 412 and asparagine 416.

It belongs to the FGGY kinase family.

It catalyses the reaction glycerol + ATP = sn-glycerol 3-phosphate + ADP + H(+). Its pathway is polyol metabolism; glycerol degradation via glycerol kinase pathway; sn-glycerol 3-phosphate from glycerol: step 1/1. Its activity is regulated as follows. Inhibited by fructose 1,6-bisphosphate (FBP). Functionally, key enzyme in the regulation of glycerol uptake and metabolism. Catalyzes the phosphorylation of glycerol to yield sn-glycerol 3-phosphate. This Acidiphilium cryptum (strain JF-5) protein is Glycerol kinase.